The following is a 318-amino-acid chain: tRNA uridine(34) hydroxylase (318 aa).

In terms of domain architecture, Rhodanese spans 123–217; that stretch reads EDDDTVIIDA…YGKDPETKGE (95 aa). Cys-177 acts as the Cysteine persulfide intermediate in catalysis.

It belongs to the TrhO family.

It carries out the reaction uridine(34) in tRNA + AH2 + O2 = 5-hydroxyuridine(34) in tRNA + A + H2O. Catalyzes oxygen-dependent 5-hydroxyuridine (ho5U) modification at position 34 in tRNAs. The polypeptide is tRNA uridine(34) hydroxylase (Staphylococcus aureus (strain MSSA476)).